The chain runs to 96 residues: Small ribosomal subunit protein bS6 (96 aa).

Belongs to the bacterial ribosomal protein bS6 family.

Functionally, binds together with bS18 to 16S ribosomal RNA. This Cutibacterium acnes (strain DSM 16379 / KPA171202) (Propionibacterium acnes) protein is Small ribosomal subunit protein bS6.